Reading from the N-terminus, the 295-residue chain is MMQITEKYLPFGNWQTYCRIVGEATDRAPLLLLHGGPGSSHNYFEVLDQVAEKSGRQVIMYDQLGCGNSSIPDDQAETAYTAQTWVKELENVREQLGLDQIHLLGQSWGGMLALIYLCDYQPEGVKSLILSSTLASAKLWSQELHRLIKYLPKGEQAAIKEAETTGNYDSLAYQAANAHFMDQHAIKLTPDLPEPVLRKKKGGSLAYLTGWGPNEYTPIGNLHGYEYTDRLKDLHLPALITSGTDDLCTPLVAKSMYDNLPNARWELFAGCGHMPFVQENAKYQELLSDWLISQD.

The 251-residue stretch at 29-279 (PLLLLHGGPG…GCGHMPFVQE (251 aa)) folds into the AB hydrolase-1 domain. Residue S107 is the Nucleophile of the active site. Residue D246 is part of the active site. The active-site Proton donor is the H273.

Belongs to the peptidase S33 family.

The protein localises to the cell envelope. It catalyses the reaction Release of N-terminal proline from a peptide.. Its function is as follows. Releases the N-terminal proline from various substrates. In Lactobacillus delbrueckii subsp. bulgaricus (strain ATCC 11842 / DSM 20081 / BCRC 10696 / JCM 1002 / NBRC 13953 / NCIMB 11778 / NCTC 12712 / WDCM 00102 / Lb 14), this protein is Proline iminopeptidase.